The sequence spans 189 residues: 7-methyl-GTP pyrophosphatase (189 aa).

Asp71 (proton acceptor) is an active-site residue.

The protein belongs to the Maf family. YceF subfamily. It depends on a divalent metal cation as a cofactor.

The protein resides in the cytoplasm. It carries out the reaction N(7)-methyl-GTP + H2O = N(7)-methyl-GMP + diphosphate + H(+). Its function is as follows. Nucleoside triphosphate pyrophosphatase that hydrolyzes 7-methyl-GTP (m(7)GTP). May have a dual role in cell division arrest and in preventing the incorporation of modified nucleotides into cellular nucleic acids. This chain is 7-methyl-GTP pyrophosphatase, found in Bdellovibrio bacteriovorus (strain ATCC 15356 / DSM 50701 / NCIMB 9529 / HD100).